The primary structure comprises 426 residues: Putative phosphate permease CPn_0680/CP_0067/CPj0680/CpB0707 (426 aa).

The next 11 membrane-spanning stretches (helical) occupy residues 1–21 (MLPL…NIGA), 42–62 (AVVI…DRVA), 87–107 (TAAL…GWPV), 112–132 (SIVG…IIYW), 137–157 (IILI…YLIF), 180–200 (FLAA…GVIL), 207–227 (WAVS…FYYV), 260–280 (LVVE…MAFA), 313–333 (LMAF…WRVI), 364–384 (ILGL…GIGL), and 399–419 (IVLS…LFFF).

Belongs to the inorganic phosphate transporter (PiT) (TC 2.A.20) family.

The protein resides in the cell membrane. Its function is as follows. Potential transporter for phosphate. The protein is Putative phosphate permease CPn_0680/CP_0067/CPj0680/CpB0707 of Chlamydia pneumoniae (Chlamydophila pneumoniae).